A 1199-amino-acid polypeptide reads, in one-letter code: AP-3 complex subunit delta-1 (1199 aa).

Alanine 2 is modified (N-acetylalanine). HEAT repeat units lie at residues 34–71 (KYIS…LGYD), 142–179 (DLAR…KYPE), 180–216 (SLRP…RNPK), 218–254 (YLSL…LEPR), 257–296 (KKLI…GMPN), 298–336 (SASI…THPK), 337–373 (SVQS…KKNL), 375–409 (EIVK…QSNY), and 521–558 (VYVQ…ERLP). 2 disordered regions span residues 623-695 (LDAW…RYQD) and 724-963 (YVKL…EPIP). A phosphoserine mark is found at serine 632, serine 634, and serine 636. Basic and acidic residues-rich tracts occupy residues 639-651 (EKPK…EEPR) and 665-675 (LARRREARKQE). Residues 659-679 (EEDEEELARRREARKQEQANN) are a coiled coil. Serine 688 carries the post-translational modification Phosphoserine. A coiled-coil region spans residues 722-750 (DQYVKLEEQRRHRQRLEKDKKRKKKEKGK). Basic residues predominate over residues 732-754 (RHRQRLEKDKKRKKKEKGKRRHS). A phosphoserine mark is found at serine 754 and serine 755. Threonine 758 is subject to Phosphothreonine. Phosphoserine is present on residues serine 760, serine 784, and serine 825. A compositionally biased stretch (acidic residues) spans 773–790 (ITEEMPENALPSDEDDKD). The segment covering 791–836 (PNDPYRALDIDLDKPLADSEKLPVQKHRNAEAVKSPEKEGVLGVEK) has biased composition (basic and acidic residues). Residues 837–846 (KSKKPKKKEK) are compositionally biased toward basic residues. Positions 843–863 (KKEKKTKEREREKKDKKGEDL) form a coiled coil. The span at 847-862 (KTKEREREKKDKKGED) shows a compositional bias: basic and acidic residues. Pro residues predominate over residues 870 to 880 (TPPPAAAPIPA). Over residues 894–916 (PKDECEVLKGEEEDHVDHDQERK) the composition is skewed to basic and acidic residues. Residues 911 to 934 (HDQERKSSRHKKKKHRKEKEKEER) adopt a coiled-coil conformation. The span at 917–928 (SSRHKKKKHRKE) shows a compositional bias: basic residues.

It belongs to the adaptor complexes large subunit family. Adaptor protein complex 3 (AP-3) is a heterotetramer composed of two large adaptins (delta-type subunit AP3D1 and beta-type subunit AP3B1 or AP3B2), a medium adaptin (mu-type subunit AP3M1 or AP3M2) and a small adaptin (sigma-type subunit APS1 or AP3S2). AP-3 associates with the BLOC-1 complex. Interacts with SLC30A2. Interacts with CLN3 (via dileucine motif); this interaction facilitates lysosomal targeting.

It localises to the cytoplasm. It is found in the golgi apparatus membrane. Its function is as follows. Part of the AP-3 complex, an adaptor-related complex which is not clathrin-associated. The complex is associated with the Golgi region as well as more peripheral structures. It facilitates the budding of vesicles from the Golgi membrane and may be directly involved in trafficking to lysosomes. Involved in process of CD8+ T-cell and NK cell degranulation. In concert with the BLOC-1 complex, AP-3 is required to target cargos into vesicles assembled at cell bodies for delivery into neurites and nerve terminals. This Mus musculus (Mouse) protein is AP-3 complex subunit delta-1 (Ap3d1).